We begin with the raw amino-acid sequence, 244 residues long: Probable histone-lysine N-methyltransferase set-23 (244 aa).

The 62-residue stretch at 25–86 (EGCNCEAECS…SCRNRVVQCG (62 aa)) folds into the Pre-SET domain. Residues C27, C29, C33, C39, C41, C65, C69, C71, and C78 each contribute to the Zn(2+) site. Residues 89 to 213 (KKLEIFSTCE…RGEELCYDYG (125 aa)) form the SET domain. S-adenosyl-L-methionine is bound by residues 101 to 103 (KGF), D141, Y143, R170, and 173 to 174 (NH). 4 residues coordinate Zn(2+): C176, C225, C227, and C232. The Post-SET domain occupies 221–237 (NRKLCLCKSEKCRKYLP).

Belongs to the class V-like SAM-binding methyltransferase superfamily. Histone-lysine methyltransferase family. Suvar3-9 subfamily.

It localises to the nucleus. The protein resides in the chromosome. The enzyme catalyses L-lysyl-[histone] + S-adenosyl-L-methionine = N(6)-methyl-L-lysyl-[histone] + S-adenosyl-L-homocysteine + H(+). Its function is as follows. Probable histone methyltransferase. Required for embryonic development. The protein is Probable histone-lysine N-methyltransferase set-23 (set-23) of Caenorhabditis elegans.